We begin with the raw amino-acid sequence, 208 residues long: Dephospho-CoA kinase (208 aa).

The 201-residue stretch at leucine 8–glutamate 208 folds into the DPCK domain. Glycine 16 to threonine 21 is a binding site for ATP.

The protein belongs to the CoaE family.

It is found in the cytoplasm. It carries out the reaction 3'-dephospho-CoA + ATP = ADP + CoA + H(+). Its pathway is cofactor biosynthesis; coenzyme A biosynthesis; CoA from (R)-pantothenate: step 5/5. In terms of biological role, catalyzes the phosphorylation of the 3'-hydroxyl group of dephosphocoenzyme A to form coenzyme A. This Chlorobaculum tepidum (strain ATCC 49652 / DSM 12025 / NBRC 103806 / TLS) (Chlorobium tepidum) protein is Dephospho-CoA kinase.